Here is a 160-residue protein sequence, read N- to C-terminus: Nucleotide-binding protein VC_1508 (160 aa).

This sequence belongs to the YajQ family.

Its function is as follows. Nucleotide-binding protein. The chain is Nucleotide-binding protein VC_1508 from Vibrio cholerae serotype O1 (strain ATCC 39315 / El Tor Inaba N16961).